An 816-amino-acid chain; its full sequence is Auxin response factor 12 (816 aa).

Low complexity predominate over residues 1–10 (MSSSSAASIG). The interval 1-24 (MSSSSAASIGPPQPPPPPAPPEEE) is disordered. A compositionally biased stretch (pro residues) spans 11-20 (PPQPPPPPAP). The segment at residues 135-237 (FCKTLTASDT…QLLLGIRRAS (103 aa)) is a DNA-binding region (TF-B3). The interval 526–565 (NDQKQKIQPDQSYQVPTSAVLPSPTSLPSHLREKFGFSDP) is disordered. Residues 717 to 801 (RTFVKVYKSG…WYIKILSPED (85 aa)) form the PB1 domain.

This sequence belongs to the ARF family. In terms of assembly, homodimers and heterodimers.

It is found in the nucleus. Its function is as follows. Auxin response factors (ARFs) are transcriptional factors that bind specifically to the DNA sequence 5'-TGTCTC-3' found in the auxin-responsive promoter elements (AuxREs). This Oryza sativa subsp. indica (Rice) protein is Auxin response factor 12 (ARF12).